We begin with the raw amino-acid sequence, 365 residues long: P2Y purinoceptor 4 (365 aa).

Residues 1-34 (MASTESSLLRSLGLSPGPGSSEVELDCWFDEDFK) lie on the Extracellular side of the membrane. A helical membrane pass occupies residues 35-61 (FILLPVSYAVVFVLGLGLNAPTLWLFI). Over 62–72 (FRLRPWDATAT) the chain is Cytoplasmic. Residues 73 to 95 (YMFHLALSDTLYVLSLPTLIYYY) form a helical membrane-spanning segment. The Extracellular segment spans residues 96-112 (AAHNHWPFGTEICKFVR). An intrachain disulfide couples Cys-108 to Cys-185. A helical membrane pass occupies residues 113–131 (FLFYWNLYCSVLFLTCISV). The Cytoplasmic segment spans residues 132–154 (HRYLGICHPLRALRWGRPRLAGL). A helical transmembrane segment spans residues 155–174 (LCLAVWLVVAGCLVPNLFFV). Residues 175 to 196 (TTSNKGTTVLCHDTTRPEEFDH) are Extracellular-facing. The chain crosses the membrane as a helical span at residues 197-222 (YVHFSSAVMGLLFGVPCLVTLVCYGL). The Cytoplasmic segment spans residues 223 to 246 (MARRLYQPLPGSAQSSSRLRSLRT). A helical transmembrane segment spans residues 247–269 (IAVVLTVFAVCFVPFHITRTIYY). Residues 270–287 (LARLLEADCRVLNIVNVV) lie on the Extracellular side of the membrane. Residues 288–309 (YKVTRPLASANSCLDPVLYLLT) traverse the membrane as a helical segment. At 310 to 365 (GDKYRRQLRQLCGGGKPQPRTAASSLALVSLPEDSSCRWAATPQDSSCSTPRADRL) the chain is on the cytoplasmic side. Residues Ser-333 and Ser-334 each carry the phosphoserine modification.

Belongs to the G-protein coupled receptor 1 family. Phosphorylation of Ser-333 and Ser-334 is a key step in agonist-dependent desensitization and loss of surface P2RY4. This phosphorylation does not involve PKC, nor other calcium activated kinases. In terms of tissue distribution, pancreas.

The protein resides in the cell membrane. Receptor for UTP and UDP coupled to G-proteins that activate a phosphatidylinositol-calcium second messenger system. Not activated by ATP or ADP. The polypeptide is P2Y purinoceptor 4 (P2RY4) (Homo sapiens (Human)).